The sequence spans 699 residues: Elongation factor G (699 aa).

In terms of domain architecture, tr-type G spans 8–288; that stretch reads EDYRNFGIMA…AVVDYLPSPL (281 aa). Residues 17-24, 86-90, and 140-143 each bind GTP; these read AHIDAGKT, DTPGH, and NKMD.

It belongs to the TRAFAC class translation factor GTPase superfamily. Classic translation factor GTPase family. EF-G/EF-2 subfamily.

It localises to the cytoplasm. In terms of biological role, catalyzes the GTP-dependent ribosomal translocation step during translation elongation. During this step, the ribosome changes from the pre-translocational (PRE) to the post-translocational (POST) state as the newly formed A-site-bound peptidyl-tRNA and P-site-bound deacylated tRNA move to the P and E sites, respectively. Catalyzes the coordinated movement of the two tRNA molecules, the mRNA and conformational changes in the ribosome. The sequence is that of Elongation factor G from Rhizobium rhizogenes (strain K84 / ATCC BAA-868) (Agrobacterium radiobacter).